A 538-amino-acid chain; its full sequence is Chaperonin GroEL (538 aa).

ATP contacts are provided by residues 29-32 (TLGP), 86-90 (DGTTT), glycine 413, 477-479 (NAA), and aspartate 493.

It belongs to the chaperonin (HSP60) family. Forms a cylinder of 14 subunits composed of two heptameric rings stacked back-to-back. Interacts with the co-chaperonin GroES.

The protein resides in the cytoplasm. The catalysed reaction is ATP + H2O + a folded polypeptide = ADP + phosphate + an unfolded polypeptide.. Together with its co-chaperonin GroES, plays an essential role in assisting protein folding. The GroEL-GroES system forms a nano-cage that allows encapsulation of the non-native substrate proteins and provides a physical environment optimized to promote and accelerate protein folding. In Scardovia inopinata (Bifidobacterium inopinatum), this protein is Chaperonin GroEL.